A 212-amino-acid chain; its full sequence is Ribonuclease HII (212 aa).

Residues 4–206 (EVQCGIDEAG…YKKIKEDVES (203 aa)) enclose the RNase H type-2 domain. A divalent metal cation-binding residues include aspartate 10, glutamate 11, and aspartate 103.

It belongs to the RNase HII family. It depends on Mn(2+) as a cofactor. The cofactor is Mg(2+).

It localises to the cytoplasm. It catalyses the reaction Endonucleolytic cleavage to 5'-phosphomonoester.. In terms of biological role, endonuclease that specifically degrades the RNA of RNA-DNA hybrids. The sequence is that of Ribonuclease HII from Thermoplasma volcanium (strain ATCC 51530 / DSM 4299 / JCM 9571 / NBRC 15438 / GSS1).